Consider the following 279-residue polypeptide: BEN domain-containing protein 6 (279 aa).

A compositionally biased stretch (polar residues) spans methionine 1 to alanine 15. 2 disordered regions span residues methionine 1–leucine 65 and arginine 134–lysine 172. A coiled-coil region spans residues leucine 62–glutamine 99. The segment covering arginine 134–cysteine 148 has biased composition (polar residues). The span at lysine 162–lysine 172 shows a compositional bias: basic and acidic residues. The BEN domain occupies glutamate 171–lysine 271.

Interacts (via BEN domain) with RBPJ.

The protein localises to the nucleus. In terms of biological role, acts as a corepressor of recombining binding protein suppressor hairless (RBPJ) and inhibits Notch signaling in neural stem cells, thereby opposing their self-renewal and promoting neurogenesis. The sequence is that of BEN domain-containing protein 6 (BEND6) from Homo sapiens (Human).